A 218-amino-acid chain; its full sequence is Glutathione S-transferase PM239X14 (218 aa).

One can recognise a GST N-terminal domain in the interval 2–85 (VTVKLYGMAY…YLVAKYGKGS (84 aa)). Glutathione is bound by residues 12 to 13 (ST), 41 to 42 (HK), 55 to 56 (VI), and 69 to 70 (ES). The 126-residue stretch at 93-218 (DPKAYGLFEQ…LLRNSSKEFM (126 aa)) folds into the GST C-terminal domain.

Belongs to the GST superfamily. Phi family. Expressed in vegetative rosettes.

It localises to the cytoplasm. The protein resides in the cytosol. The catalysed reaction is RX + glutathione = an S-substituted glutathione + a halide anion + H(+). Its function is as follows. Specifically catalyzes the conjugation of synthetic 1-chloro-2,4-ditrobenzene to GSH. Also functions as a glutathione peroxidase, converting linoleate oxidation products into their corresponding hydroxyacids. This enzyme may thus serve to protect the cell from oxygen toxicity as well as from exogenous toxins such as herbicides. In Arabidopsis thaliana (Mouse-ear cress), this protein is Glutathione S-transferase PM239X14.